Consider the following 156-residue polypeptide: Small ribosomal subunit protein uS7c (156 aa).

Belongs to the universal ribosomal protein uS7 family. In terms of assembly, part of the 30S ribosomal subunit.

It localises to the plastid. It is found in the chloroplast. Its function is as follows. One of the primary rRNA binding proteins, it binds directly to 16S rRNA where it nucleates assembly of the head domain of the 30S subunit. The sequence is that of Small ribosomal subunit protein uS7c (rps7) from Gracilaria tenuistipitata var. liui (Red alga).